Consider the following 187-residue polypeptide: Elongation factor P (187 aa).

It belongs to the elongation factor P family.

The protein localises to the cytoplasm. Its pathway is protein biosynthesis; polypeptide chain elongation. Functionally, involved in peptide bond synthesis. Stimulates efficient translation and peptide-bond synthesis on native or reconstituted 70S ribosomes in vitro. Probably functions indirectly by altering the affinity of the ribosome for aminoacyl-tRNA, thus increasing their reactivity as acceptors for peptidyl transferase. The sequence is that of Elongation factor P from Pseudarthrobacter chlorophenolicus (strain ATCC 700700 / DSM 12829 / CIP 107037 / JCM 12360 / KCTC 9906 / NCIMB 13794 / A6) (Arthrobacter chlorophenolicus).